We begin with the raw amino-acid sequence, 251 residues long: Triosephosphate isomerase (251 aa).

Substrate is bound at residue 9 to 11 (NWK). Residue His-95 is the Electrophile of the active site. The active-site Proton acceptor is Glu-167. Substrate is bound by residues Gly-173, Ser-212, and 233-234 (GG).

Belongs to the triosephosphate isomerase family. As to quaternary structure, homodimer.

The protein resides in the cytoplasm. The catalysed reaction is D-glyceraldehyde 3-phosphate = dihydroxyacetone phosphate. It functions in the pathway carbohydrate biosynthesis; gluconeogenesis. Its pathway is carbohydrate degradation; glycolysis; D-glyceraldehyde 3-phosphate from glycerone phosphate: step 1/1. Involved in the gluconeogenesis. Catalyzes stereospecifically the conversion of dihydroxyacetone phosphate (DHAP) to D-glyceraldehyde-3-phosphate (G3P). This is Triosephosphate isomerase from Pseudomonas putida (strain GB-1).